A 141-amino-acid chain; its full sequence is Hemoglobin subunit alpha-2 (141 aa).

The region spanning 1 to 141 (VLSEGNKKII…VTYQLSSLYR (141 aa)) is the Globin domain. An O2-binding site is contributed by His59. His88 is a binding site for heme b.

It belongs to the globin family. Heterotetramer of two alpha chains and two beta chains. In terms of tissue distribution, red blood cells.

Its function is as follows. Involved in oxygen transport from the lung to the various peripheral tissues. The protein is Hemoglobin subunit alpha-2 of Torpedo marmorata (Marbled electric ray).